A 644-amino-acid chain; its full sequence is Exoribonuclease 2 (644 aa).

Positions 189-516 (REDLTALDFV…NHRLLKAIIK (328 aa)) constitute an RNB domain. An S1 motif domain is found at 561 to 643 (DSRFAAEIID…ETRSVIARPV (83 aa)).

This sequence belongs to the RNR ribonuclease family. RNase II subfamily.

It localises to the cytoplasm. The catalysed reaction is Exonucleolytic cleavage in the 3'- to 5'-direction to yield nucleoside 5'-phosphates.. Its function is as follows. Involved in mRNA degradation. Hydrolyzes single-stranded polyribonucleotides processively in the 3' to 5' direction. The sequence is that of Exoribonuclease 2 from Cronobacter sakazakii (strain ATCC BAA-894) (Enterobacter sakazakii).